The primary structure comprises 100 residues: uncharacterized protein (100 aa).

3 helical membrane passes run 7–28, 38–60, and 65–87; these read TLIG…LLSL, AQLS…ILII, and LSAL…ANGV.

The protein resides in the cell membrane. This is an uncharacterized protein from Archaeoglobus fulgidus (strain ATCC 49558 / DSM 4304 / JCM 9628 / NBRC 100126 / VC-16).